A 250-amino-acid polypeptide reads, in one-letter code: Aquaporin TIP1-1 (250 aa).

Helical transmembrane passes span 24–44 and 56–76; these read FAEF…GMAF and AGLI…VSVG. The short motif at 85 to 87 is the NPA 1 element; sequence NPA. A run of 3 helical transmembrane segments spans residues 104–126, 143–163, and 172–192; these read LLYW…FSTG, ALVL…ATAV, and TIAP…GGAF. An NPA 2 motif is present at residues 198–200; sequence NPA. Residues 218–238 form a helical membrane-spanning segment; the sequence is YWVGPLIGGGLAGVIYELLFI.

The protein belongs to the MIP/aquaporin (TC 1.A.8) family. TIP (TC 1.A.8.10) subfamily. As to expression, expressed in roots, shoots, leaves, tassels, ears and embryos. Expressed in meristems and zones of cell enlargement: tips of primary and lateral roots, leaf primordia, and male and female inflorescence meristems. Highly expressed in the root epidermis and endodermis, parenchyma cells surrounding mature xylem vessels in the root and the stem, phloem companion cells and a ring of cells around the phloem strand in the stem and the leaf sheath, and the basal endosperm transfer cells in developing kernels.

It localises to the vacuole membrane. Water channel required to facilitate the transport of water across cell membrane. May support the rapid influx of water into vacuoles during cell expansion, permit osmotic equilibration between the cytosol and the vacuolar content and rapid transcellular water flow through living cells. Its function is impaired by Hg(2+). The sequence is that of Aquaporin TIP1-1 (TIP1-1) from Zea mays (Maize).